Reading from the N-terminus, the 234-residue chain is Putative gustatory receptor clone PTE38 (234 aa).

Residues 1–11 (MYLFFSNLSFN) traverse the membrane as a helical segment. The Extracellular portion of the chain corresponds to 12-42 (DICIITTTIPKMLMNVQSHDQSITYLGCLSQ). C39 and C121 form a disulfide bridge. A helical membrane pass occupies residues 43–62 (VYLIVNFGSIESCLLAVMAY). At 63–84 (DRYVAICHPLKYTVIMNHYFCV) the chain is on the cytoplasmic side. Residues 85–105 (MLLLFACSLALHMCLFHILMV) traverse the membrane as a helical segment. Topologically, residues 106–138 (LILTFCTKTEIPHFFCELAHIIKLTCSDNFINY) are extracellular. Residues 139-160 (LLIYTVSVLFFGVHIVGIILSY) traverse the membrane as a helical segment. The Cytoplasmic portion of the chain corresponds to 161–182 (IYTVSSVLRMSLLGGMYKAFST). A helical membrane pass occupies residues 183-202 (CGSHLSVVSLFYGTGFGVHI). The Extracellular portion of the chain corresponds to 203–212 (SSPLTDSPRK). The chain crosses the membrane as a helical span at residues 213-234 (TVVASVMYTVVTQMHGPFIYSL).

This sequence belongs to the G-protein coupled receptor 1 family. As to expression, tongue specific.

It is found in the cell membrane. Functionally, possible taste receptor. This is Putative gustatory receptor clone PTE38 from Rattus norvegicus (Rat).